Here is a 641-residue protein sequence, read N- to C-terminus: 1-deoxy-D-xylulose-5-phosphate synthase (641 aa).

Thiamine diphosphate is bound by residues H78 and 119 to 121; that span reads AHS. Position 150 (D150) interacts with Mg(2+). Thiamine diphosphate is bound by residues 151-152, N179, Y288, and E370; that span reads GA. N179 contributes to the Mg(2+) binding site.

It belongs to the transketolase family. DXPS subfamily. As to quaternary structure, homodimer. Mg(2+) is required as a cofactor. Thiamine diphosphate serves as cofactor.

It carries out the reaction D-glyceraldehyde 3-phosphate + pyruvate + H(+) = 1-deoxy-D-xylulose 5-phosphate + CO2. It functions in the pathway metabolic intermediate biosynthesis; 1-deoxy-D-xylulose 5-phosphate biosynthesis; 1-deoxy-D-xylulose 5-phosphate from D-glyceraldehyde 3-phosphate and pyruvate: step 1/1. Functionally, catalyzes the acyloin condensation reaction between C atoms 2 and 3 of pyruvate and glyceraldehyde 3-phosphate to yield 1-deoxy-D-xylulose-5-phosphate (DXP). This chain is 1-deoxy-D-xylulose-5-phosphate synthase, found in Azorhizobium caulinodans (strain ATCC 43989 / DSM 5975 / JCM 20966 / LMG 6465 / NBRC 14845 / NCIMB 13405 / ORS 571).